A 517-amino-acid chain; its full sequence is DNA-binding protein Ikaros (517 aa).

The tract at residues 1 to 71 is disordered; that stretch reads MDVDEGQDMS…QSDEENGRAC (71 aa). Ser-13 is modified (phosphoserine). Residue Thr-23 is modified to Phosphothreonine. The segment covering 37–47 has biased composition (polar residues); the sequence is LSTTSGAQQNS. Residue Lys-58 forms a Glycyl lysine isopeptide (Lys-Gly) (interchain with G-Cter in SUMO) linkage. Phosphoserine occurs at positions 63 and 101. The C2H2-type 1 zinc-finger motif lies at 117–139; that stretch reads LKCDICGIVCIGPNVLMVHKRSH. Thr-140 is subject to Phosphothreonine. The segment at 144–166 adopts a C2H2-type 2 zinc-finger fold; sequence FQCNQCGASFTQKGNLLRHIKLH. Residues 153 to 162 are required for both high-affinity DNA binding and pericentromeric heterochromatin localization; sequence FTQKGNLLRH. Ser-167 is modified (phosphoserine). The segment at 172–194 adopts a C2H2-type 3 zinc-finger fold; that stretch reads FKCHLCNYACRRRDALTGHLRTH. The tract at residues 179–194 is required for both high-affinity DNA binding and pericentromeric heterochromatin localization; the sequence is YACRRRDALTGHLRTH. Ser-195 is subject to Phosphoserine. Residues 200 to 223 form a C2H2-type 4 zinc finger; that stretch reads HKCGYCGRSYKQRSSLEEHKERCH. Residue Lys-239 forms a Glycyl lysine isopeptide (Lys-Gly) (interchain with G-Cter in SUMO) linkage. Residues Ser-259, Ser-287, Ser-293, Ser-357, Ser-360, Ser-384, Ser-386, Ser-388, and Ser-392 each carry the phosphoserine modification. The disordered stretch occupies residues 376–400; sequence SVSSEREASPSNSCQDSTDTESNAE. Position 393 is a phosphothreonine (Thr-393). Phosphoserine occurs at positions 397 and 440. C2H2-type zinc fingers lie at residues 457 to 479 and 488 to 512; these read YKCE…MGCH and FECN…RGEH. The segment at 463–466 is required for binding PP1CC; it reads RVLF.

It belongs to the Ikaros C2H2-type zinc-finger protein family. In terms of assembly, heterodimer with other IKAROS family members. Interacts with IKZF4 and IKZF5. Component of the chromatin-remodeling NuRD repressor complex which includes at least HDAC1, HDAC2, RBBP4, RBBP7, IKZF1, MTA2, MBD2, MBD3, MTA1L1, CHD3 and CHD4. Interacts directly with the CHD4 component of the NuRD complex. Interacts directly with SMARCA4; the interaction associates IKFZ1 with the BAF complex. Interacts with SUMO1; the interaction sumoylates IKAROS, promoted by PIAS2 and PIAS3. Interacts with PIAS2 (isoform alpha); the interaction promotes sumoylation and reduces transcription repression. Interacts, to a lesser extent, with PIAS3. Interacts with PPP1CC; the interaction targets PPP1CC to pericentromeric heterochromatin, dephosphorylates IKAROS, stabilizes it and prevents it from degradation. Interacts with IKZF3. Post-translationally, phosphorylation at Ser-357 and Ser-360 downstream of SYK induces nuclear translocation. Phosphorylation controls cell-cycle progression from late G(1) stage to S stage. Hyperphosphorylated during G2/M phase. Dephosphorylated state during late G(1) phase. Phosphorylation on Thr-140 is required for DNA and pericentromeric location during mitosis. CK2 is the main kinase, in vitro. GSK3 and CDK may also contribute to phosphorylation of the C-terminal serine and threonine residues. Phosphorylation on these C-terminal residues reduces the DNA-binding ability. Phosphorylation/dephosphorylation events on Ser-13 and Ser-293 regulate TDT expression during thymocyte differentiation. Dephosphorylation by protein phosphatase 1 regulates stability and pericentromeric heterochromatin location. Phosphorylated in both lymphoid and non-lymphoid tissues. In terms of processing, sumoylated. Simultaneous sumoylation on the 2 sites results in a loss of both HDAC-dependent and HDAC-independent repression. Has no effect on pericentromeric heterochromatin location. Desumoylated by SENP1. Polyubiquitinated. In terms of tissue distribution, strongly expressed in T-cells and their progenitors,in B-cells, and in all early embryonic retinal progenitor cells (RPCs). Isoforms V and VI are the predominant isoforms in lymphocytes.

The protein localises to the nucleus. It localises to the cytoplasm. Functionally, transcription regulator of hematopoietic cell differentiation. Binds gamma-satellite DNA. Binds with higher affinity to gamma satellite A. Plays a role in the development of lymphocytes, B- and T-cells. Binds and activates the enhancer (delta-A element) of the CD3-delta gene. Repressor of the TDT (terminal deoxynucleotidyltransferase) gene during thymocyte differentiation. Regulates transcription through association with both HDAC-dependent and HDAC-independent complexes. Targets the 2 chromatin-remodeling complexes, NuRD and BAF (SWI/SNF), in a single complex (PYR complex), to the beta-globin locus in adult erythrocytes. Increases normal apoptosis in adult erythroid cells. Confers early temporal competence to retinal progenitor cells (RPCs). Function is isoform-specific and is modulated by dominant-negative inactive isoforms. This Mus musculus (Mouse) protein is DNA-binding protein Ikaros (Ikzf1).